The chain runs to 95 residues: Large ribosomal subunit protein bL27 (95 aa).

The tract at residues 1 to 25 (MAHKKGTGSTRNGRDSNAQRLGVKR) is disordered. Positions 7 to 19 (TGSTRNGRDSNAQ) are enriched in polar residues.

This sequence belongs to the bacterial ribosomal protein bL27 family.

This chain is Large ribosomal subunit protein bL27, found in Gloeobacter violaceus (strain ATCC 29082 / PCC 7421).